The chain runs to 126 residues: Large ribosomal subunit protein bL12 (126 aa).

The protein belongs to the bacterial ribosomal protein bL12 family. In terms of assembly, homodimer. Part of the ribosomal stalk of the 50S ribosomal subunit. Forms a multimeric L10(L12)X complex, where L10 forms an elongated spine to which 2 to 4 L12 dimers bind in a sequential fashion. Binds GTP-bound translation factors.

In terms of biological role, forms part of the ribosomal stalk which helps the ribosome interact with GTP-bound translation factors. Is thus essential for accurate translation. This Methylobacterium sp. (strain 4-46) protein is Large ribosomal subunit protein bL12.